A 436-amino-acid polypeptide reads, in one-letter code: Ribosomal protein uS12 methylthiotransferase RimO (436 aa).

The MTTase N-terminal domain maps to 2–114 (PNLYLVSLGC…IDEMILKKQN (113 aa)). 6 residues coordinate [4Fe-4S] cluster: Cys-11, Cys-45, Cys-77, Cys-146, Cys-150, and Cys-153. One can recognise a Radical SAM core domain in the interval 132-363 (TGSSYHAYIK…IKKQIEGSFK (232 aa)). A TRAM domain is found at 363–434 (KSLVGEVIKV…KDKLIGEIIC (72 aa)).

The protein belongs to the methylthiotransferase family. RimO subfamily. It depends on [4Fe-4S] cluster as a cofactor.

Its subcellular location is the cytoplasm. It carries out the reaction L-aspartate(89)-[ribosomal protein uS12]-hydrogen + (sulfur carrier)-SH + AH2 + 2 S-adenosyl-L-methionine = 3-methylsulfanyl-L-aspartate(89)-[ribosomal protein uS12]-hydrogen + (sulfur carrier)-H + 5'-deoxyadenosine + L-methionine + A + S-adenosyl-L-homocysteine + 2 H(+). In terms of biological role, catalyzes the methylthiolation of an aspartic acid residue of ribosomal protein uS12. This chain is Ribosomal protein uS12 methylthiotransferase RimO, found in Campylobacter fetus subsp. fetus (strain 82-40).